We begin with the raw amino-acid sequence, 336 residues long: GTPase Obg (336 aa).

The region spanning Met1–Met159 is the Obg domain. Residues Gly120–Pro143 are disordered. Residues His129 to Pro138 are compositionally biased toward polar residues. In terms of domain architecture, OBG-type G spans Ala160–Ser323. GTP-binding positions include Gly166–Ser173, Phe191–Val195, Asp213–Gly216, Thr280–Asp283, and Ser304–Val306. The Mg(2+) site is built by Ser173 and Thr193.

Belongs to the TRAFAC class OBG-HflX-like GTPase superfamily. OBG GTPase family. Monomer. It depends on Mg(2+) as a cofactor.

It localises to the cytoplasm. An essential GTPase which binds GTP, GDP and possibly (p)ppGpp with moderate affinity, with high nucleotide exchange rates and a fairly low GTP hydrolysis rate. Plays a role in control of the cell cycle, stress response, ribosome biogenesis and in those bacteria that undergo differentiation, in morphogenesis control. The protein is GTPase Obg of Chlorobium phaeovibrioides (strain DSM 265 / 1930) (Prosthecochloris vibrioformis (strain DSM 265)).